A 470-amino-acid polypeptide reads, in one-letter code: Cyclic AMP receptor-like protein D (470 aa).

Over 1–16 the chain is Extracellular; sequence MSSCSSLSMDDRVKIG. The chain crosses the membrane as a helical span at residues 17 to 37; sequence YGSIAGASLSIIGSIGTIILI. Residues 38 to 123 are Cytoplasmic-facing; sequence KIRNKKQEKK…NNNQKTKVSH (86 aa). The chain crosses the membrane as a helical span at residues 124–144; the sequence is FIINLSIANLLASIFMITIKL. At 145 to 176 the chain is on the extracellular side; sequence MMIHFNDKFIKVLPSTANHSFNALISVCTIGN. N-linked (GlcNAc...) asparagine glycosylation occurs at Asn-162. A disulfide bond links Cys-172 and Cys-287. The helical transmembrane segment at 177–197 threads the bilayer; sequence GVIGFSFISTFFWTLAISMYI. Topologically, residues 198–253 are cytoplasmic; the sequence is YQQFLSSSTINSNNNNNNINNINNNNNNNINNINNSKNNNSINNFNNSNKSNKIIK. A helical membrane pass occupies residues 254 to 274; it reads MLFYFVCWVIPFVLGSILVSG. The Extracellular segment spans residues 275-295; the sequence is SRLIELNSDLPWCSIDSNIQL. The chain crosses the membrane as a helical span at residues 296–316; it reads ISFYFPLIICLLATTFFTILI. Residues 317–342 lie on the Cytoplasmic side of the membrane; that stretch reads KYKFSNDKLACSSSSLINLQSKIIQR. The chain crosses the membrane as a helical span at residues 343–363; it reads LILFLIVILVCWVPSLISFFI. Over 364–372 the chain is Extracellular; the sequence is SFFSKNCKQ. A helical membrane pass occupies residues 373–393; that stretch reads FLWLEIISSTIQSCQGILNFL. Residues 394-470 are Cytoplasmic-facing; that stretch reads SYLSIFKKLK…DFDNNQIQEK (77 aa).

The protein belongs to the G-protein coupled receptor 5 family.

It is found in the membrane. Its function is as follows. Receptor for cAMP. This Dictyostelium discoideum (Social amoeba) protein is Cyclic AMP receptor-like protein D (crlD).